We begin with the raw amino-acid sequence, 811 residues long: Vacuolar protein sorting-associated protein 70 (811 aa).

A compositionally biased stretch (basic and acidic residues) spans 1 to 21 (MRMIQRERKREKEEGQLKERT). A disordered region spans residues 1 to 63 (MRMIQRERKR…MNDSFTLTSR (63 aa)). Asn-55 carries N-linked (GlcNAc...) asparagine glycosylation. The chain crosses the membrane as a helical span at residues 90–110 (FMYLILASLLLYMGFVAAFAP). Residue Asn-237 is glycosylated (N-linked (GlcNAc...) asparagine). A disordered region spans residues 334 to 367 (FSDTPGDPTTPGYPSKDSDTEHMSPVGRVPRIPS). Over residues 336–345 (DTPGDPTTPG) the composition is skewed to low complexity. His-445, Asp-456, and Asp-522 together coordinate Zn(2+). N-linked (GlcNAc...) asparagine glycans are attached at residues Asn-568 and Asn-599. A Zn(2+)-binding site is contributed by His-607. Asn-670 carries N-linked (GlcNAc...) asparagine glycosylation.

Belongs to the peptidase M28 family. M28B subfamily. It depends on Zn(2+) as a cofactor.

Its subcellular location is the membrane. Functionally, involved in vacuolar protein sorting. This chain is Vacuolar protein sorting-associated protein 70 (VPS70), found in Saccharomyces cerevisiae (strain ATCC 204508 / S288c) (Baker's yeast).